The primary structure comprises 843 residues: Transmembrane protease serine 7 (843 aa).

Residues 1-76 lie on the Cytoplasmic side of the membrane; it reads MDKENSDVSA…KVPFWNVQNK (76 aa). The interval 27 to 67 is disordered; the sequence is AQKKLPVRRPPLPGRRLPLPGRRPPQRPIGKAKPKKQSKKK. Over residues 56–67 the composition is skewed to basic residues; it reads GKAKPKKQSKKK. The helical; Signal-anchor for type II membrane protein transmembrane segment at 77–97 threads the bilayer; that stretch reads IILFTVFLFILAVIAWTLLWL. The Extracellular segment spans residues 98–843; that stretch reads YISKTESKDA…WIHKYVPSLL (746 aa). The 129-residue stretch at 106–234 folds into the SEA domain; the sequence is DAFYFAGMFR…DSVVLNAGLR (129 aa). Intrachain disulfides connect Cys-247–Cys-273, Cys-299–Cys-322, Cys-365–Cys-396, Cys-484–Cys-496, Cys-491–Cys-509, Cys-503–Cys-518, Cys-525–Cys-544, Cys-538–Cys-553, Cys-559–Cys-571, Cys-566–Cys-585, Cys-579–Cys-594, and Cys-631–Cys-647. 2 consecutive CUB domains span residues 247-360 and 365-481; these read CSQY…FEVI and CENT…YNIS. LDL-receptor class A domains are found at residues 483–519, 517–554, and 558–595; these read PCPV…LFCV, FCVS…QNCT, and PCNN…EGCT. Positions 606 to 840 constitute a Peptidase S1 domain; the sequence is IIGGTDTLEG…FVPWIHKYVP (235 aa). Catalysis depends on charge relay system residues His-646 and Asp-694. Cystine bridges form between Cys-730/Cys-796 and Cys-762/Cys-775. The active-site Charge relay system is the Ser-790.

This sequence belongs to the peptidase S1 family. As to quaternary structure, forms a heterodimer with SERPINA5. Post-translationally, N-glycosylated. Expressed in brain, ovary, testis, salivary gland, trachea and lung.

It localises to the cell membrane. Serine protease which preferentially hydrolyzes peptides with Arg at the P1 position. The polypeptide is Transmembrane protease serine 7 (TMPRSS7) (Homo sapiens (Human)).